The chain runs to 318 residues: Thymidylate synthase (318 aa).

Residues Arg25 and 180 to 181 (RR) each bind dUMP. Residue Cys200 is the Nucleophile of the active site. DUMP-binding positions include 220–223 (RSGD), Asn231, and 261–263 (HIY). Asp223 lines the (6R)-5,10-methylene-5,6,7,8-tetrahydrofolate pocket. Residue Ala317 participates in (6R)-5,10-methylene-5,6,7,8-tetrahydrofolate binding.

Belongs to the thymidylate synthase family. Bacterial-type ThyA subfamily. In terms of assembly, homodimer.

Its subcellular location is the cytoplasm. It catalyses the reaction dUMP + (6R)-5,10-methylene-5,6,7,8-tetrahydrofolate = 7,8-dihydrofolate + dTMP. It functions in the pathway pyrimidine metabolism; dTTP biosynthesis. Functionally, catalyzes the reductive methylation of 2'-deoxyuridine-5'-monophosphate (dUMP) to 2'-deoxythymidine-5'-monophosphate (dTMP) while utilizing 5,10-methylenetetrahydrofolate (mTHF) as the methyl donor and reductant in the reaction, yielding dihydrofolate (DHF) as a by-product. This enzymatic reaction provides an intracellular de novo source of dTMP, an essential precursor for DNA biosynthesis. This is Thymidylate synthase from Lactobacillus johnsonii (strain CNCM I-12250 / La1 / NCC 533).